We begin with the raw amino-acid sequence, 1626 residues long: Collagen alpha-1(XXII) chain (1626 aa).

The first 27 residues, 1-27, serve as a signal peptide directing secretion; it reads MAGLRGNAVAGLLWMLLLWSGGGGCQA. The VWFA domain maps to 38–213; sequence DLVFLLDTSS…NAIDKIRGKL (176 aa). One can recognise a Laminin G-like domain in the interval 239–427; sequence GTKEITGFDL…LQRIVIYCDS (189 aa). Asn-375 carries an N-linked (GlcNAc...) asparagine glycan. Collagen-like domains lie at 481–520, 526–565, 566–625, 657–708, 714–773, 774–833, 868–922, 925–984, 1047–1095, 1118–1155, 1156–1215, 1249–1308, 1315–1374, 1387–1446, 1495–1550, and 1575–1604; these read GEKG…GDVG, QGEK…PGEV, GMRG…PGPS, GEQG…GIPG, GPPG…PGER, GEDG…PGLK, GPKG…GAPG, GAPG…PGKG, AGPP…PGKP, PPGP…AGPP, GLPG…AGPP, GKPG…PGKD, GPQG…PGEK, GEPG…PGPP, SQGR…PGAP, and DGLP…PPGQ. Disordered regions lie at residues 506–1002, 1019–1103, 1119–1458, and 1491–1609; these read PVGA…GPLG, GGQC…LLSP, PGPP…RGES, and YMKS…DPSQ. Residues 544–553 show a composition bias toward basic and acidic residues; it reads DGSKGMRGEP. The segment covering 571–580 has biased composition (pro residues); the sequence is QGPPGLPGPP. Positions 591 to 606 are enriched in basic and acidic residues; it reads ERGEKGTRGEKGERGL. Residues 661-670 are compositionally biased toward low complexity; it reads APGPRGHQGA. 2 stretches are compositionally biased toward pro residues: residues 715–728 and 742–751; these read PPGP…PGPG and KPGPPGPTGP. Composition is skewed to basic and acidic residues over residues 769 to 778 and 815 to 826; these read EPGERGEDGL and RGEKGDQGEKGE. Low complexity predominate over residues 908 to 939; it reads AHGAPGAAGNPGAPGHVGAPGPSGPPGSVGAP. Over residues 945 to 957 the composition is skewed to basic and acidic residues; sequence PGKDGERGEKGAA. 2 stretches are compositionally biased toward low complexity: residues 959–974 and 1056–1065; these read EEGS…DPGA and PGDKGSPGSR. Basic and acidic residues-rich tracts occupy residues 1131–1151 and 1173–1185; these read KGDK…KKGE and RGAD…KGDQ. A compositionally biased stretch (low complexity) spans 1205-1223; sequence ADGIAGAAGPPGIQGSPGK. Residues 1241 to 1250 are compositionally biased toward basic and acidic residues; the sequence is EEGKEGRDGK. The segment covering 1260–1275 has biased composition (low complexity); it reads AGEPGLPGPEGARGPP. The span at 1379 to 1389 shows a compositional bias: low complexity; that stretch reads KEGVPGKPGEP. The segment covering 1391-1404 has biased composition (basic and acidic residues); sequence FKGERGDPGIKGDK. The segment covering 1405-1414 has biased composition (gly residues); the sequence is GPPGGKGQPG. Over residues 1440–1449 the composition is skewed to pro residues; the sequence is VGPPGPPGQP. The span at 1521–1530 shows a compositional bias: gly residues; it reads GRPGQGGLEG. Residues 1595–1604 show a composition bias toward pro residues; it reads LPGPPGPPGQ.

Belongs to the fibril-associated collagens with interrupted helices (FACIT) family. As to expression, restrictive expression is observed at tissue junctions such as the myotendinous junction in skeletal and heart muscle, the articular cartilage-synovial fluid junction, or the border between the anagen hair follicle and the dermis in the skin. It is deposited in the basement membrane zone of the myotendinous junction and the hair follicle and associated with the extrafibrillar matrix in cartilage.

Its subcellular location is the secreted. It localises to the extracellular space. The protein resides in the extracellular matrix. It is found in the cytoplasm. Its function is as follows. Acts as a cell adhesion ligand for skin epithelial cells and fibroblasts. The sequence is that of Collagen alpha-1(XXII) chain (COL22A1) from Homo sapiens (Human).